The sequence spans 454 residues: Protein IQ-DOMAIN 1 (454 aa).

A calmodulin-binding region spans residues Gly103–Leu113. The IQ domain occupies Glu107–Leu136. Positions Trp272–Pro454 are disordered. Polar residues predominate over residues Asn280 to Arg328. Over residues Lys343 to Arg356 the composition is skewed to basic and acidic residues. Residues Leu371–Ser388 are compositionally biased toward polar residues. The span at Thr397–Ser412 shows a compositional bias: low complexity. A Nuclear localization signal motif is present at residues Lys421–Ala428. Residues Lys442–Pro454 show a composition bias toward basic and acidic residues.

This sequence belongs to the IQD family. As to quaternary structure, binds to multiple calmodulin (CaM) in the presence of Ca(2+)(e.g. CaM1 and CaM2) and CaM-like (e.g. CML8 and CML9) proteins. Interacts with KLCR1. Expressed in roots, flowers, stems, siliques, inflorescence stems and whole shoots. Restricted to the vascular bundles.

It is found in the nucleus. It localises to the nucleolus. The protein resides in the cytoplasm. The protein localises to the cytoskeleton. Functionally, may be involved in cooperative interactions with calmodulins or calmodulin-like proteins. Modulates expression of glucosinolate pathway genes. May associate with nucleic acids and regulate gene expression at the transcriptional or post-transcriptional level. Recruits KLCR1 and calmodulin proteins to microtubules, thus being a potential scaffold in cellular signaling and trafficking. This is Protein IQ-DOMAIN 1 from Arabidopsis thaliana (Mouse-ear cress).